The following is a 28-amino-acid chain: Kappa-stichotoxin-Shd1a/kappa-stichotoxin-Shd1b (28 aa).

Pro-6 bears the 4-hydroxyproline; in form SHTX-1 (Shd1a) mark. 2 disulfides stabilise this stretch: Cys-7/Cys-19 and Cys-10/Cys-25.

Belongs to the sea anemone BBH family. Occurs in 2 forms which differ in the post-translational modification of Pro-6. In form SHTX-1 (Shd1a) Pro-6 is a hydroxyproline while in form SHTX-2 (Shd1b) Pro-6 is unmodified.

It is found in the secreted. The protein resides in the nematocyst. Functionally, kappa-stichotoxin-Shd1a: inhibits voltage-gated potassium channels (Kv). In terms of biological role, kappa-stichotoxin-Shd1b: inhibits voltage-gated potassium channels (Kv). This toxin inhibits the binding of 125I-alpha-dendrotoxin to synaptosomal membranes (IC(50)=270 nM). In Stichodactyla haddoni (Saddle carpet anemone), this protein is Kappa-stichotoxin-Shd1a/kappa-stichotoxin-Shd1b.